A 327-amino-acid polypeptide reads, in one-letter code: GTPase Obg (327 aa).

The 159-residue stretch at 1–159 folds into the Obg domain; sequence MKFVDSARIV…LKVDLELKLM (159 aa). The segment at 120 to 145 is disordered; it reads GGDGGRGNPHFTTSTRQAPRYAEPGG. One can recognise an OBG-type G domain in the interval 160-323; sequence ADVGLVGFPN…LRNALWNTIN (164 aa). GTP is bound by residues 166 to 173, 191 to 195, 213 to 216, 280 to 283, and 304 to 306; these read GFPNAGKS, FTTLV, DIPG, TKMD, and SSI. Mg(2+)-binding residues include S173 and T193.

Belongs to the TRAFAC class OBG-HflX-like GTPase superfamily. OBG GTPase family. In terms of assembly, monomer. Mg(2+) is required as a cofactor.

It is found in the cytoplasm. In terms of biological role, an essential GTPase which binds GTP, GDP and possibly (p)ppGpp with moderate affinity, with high nucleotide exchange rates and a fairly low GTP hydrolysis rate. Plays a role in control of the cell cycle, stress response, ribosome biogenesis and in those bacteria that undergo differentiation, in morphogenesis control. The sequence is that of GTPase Obg from Prosthecochloris aestuarii (strain DSM 271 / SK 413).